We begin with the raw amino-acid sequence, 281 residues long: MEIISDKAAMAARSEAVRREGKTIAFVPTMGYLHEGHLSLLKRGRSLCDYLVLSIFVNPTQFGPNEDLDAYPRDEERDRKVAQEAGVDVIFMPNNEMMYGPNYQTYVALEKLPYHLCGLSRPVHFRGVATVVTKLFNIVRPHTAIFGEKDFQQLAVIRQMVKDLDFGIEIIGGPTVREPDGLAMSSRNAYLTPEQRKDAVALYNSLNQAQEMVSAGGKSAAAILEKASETILAVPGAEIDYAKLCDPATLDDVEAIAGPTLMALAVKIGSTRLIDNKVLEP.

Met30–His37 is a binding site for ATP. His37 serves as the catalytic Proton donor. Gln61 lines the (R)-pantoate pocket. Position 61 (Gln61) interacts with beta-alanine. Gly147–Asp150 serves as a coordination point for ATP. Gln153 provides a ligand contact to (R)-pantoate. ATP is bound by residues Val176 and Met184–Arg187.

This sequence belongs to the pantothenate synthetase family. Homodimer.

It is found in the cytoplasm. The catalysed reaction is (R)-pantoate + beta-alanine + ATP = (R)-pantothenate + AMP + diphosphate + H(+). Its pathway is cofactor biosynthesis; (R)-pantothenate biosynthesis; (R)-pantothenate from (R)-pantoate and beta-alanine: step 1/1. In terms of biological role, catalyzes the condensation of pantoate with beta-alanine in an ATP-dependent reaction via a pantoyl-adenylate intermediate. The chain is Pantothenate synthetase from Desulfatibacillum aliphaticivorans.